We begin with the raw amino-acid sequence, 494 residues long: Alpha-amylase A (494 aa).

An N-terminal signal peptide occupies residues 1–18; it reads MFLAKSLVCLALLAVANA. Glutamine 19 bears the Pyrrolidone carboxylic acid mark. A disulfide bridge connects residues cysteine 46 and cysteine 102. The Ca(2+) site is built by asparagine 116, arginine 165, and aspartate 174. Residues cysteine 153 and cysteine 167 are joined by a disulfide bond. Arginine 202 serves as a coordination point for chloride. The active-site Nucleophile is the aspartate 204. Histidine 208 contacts Ca(2+). The active-site Proton donor is glutamate 241. 2 residues coordinate chloride: asparagine 304 and arginine 343. Cystine bridges form between cysteine 376–cysteine 382 and cysteine 448–cysteine 460.

Belongs to the glycosyl hydrolase 13 family. In terms of assembly, monomer. It depends on Ca(2+) as a cofactor. Chloride serves as cofactor.

The catalysed reaction is Endohydrolysis of (1-&gt;4)-alpha-D-glucosidic linkages in polysaccharides containing three or more (1-&gt;4)-alpha-linked D-glucose units.. The protein is Alpha-amylase A (Amy-d) of Drosophila mauritiana (Fruit fly).